The sequence spans 153 residues: Protein-export protein SecB (153 aa).

This sequence belongs to the SecB family. Homotetramer, a dimer of dimers. One homotetramer interacts with 1 SecA dimer.

It is found in the cytoplasm. Its function is as follows. One of the proteins required for the normal export of preproteins out of the cell cytoplasm. It is a molecular chaperone that binds to a subset of precursor proteins, maintaining them in a translocation-competent state. It also specifically binds to its receptor SecA. The sequence is that of Protein-export protein SecB from Edwardsiella ictaluri (strain 93-146).